Reading from the N-terminus, the 51-residue chain is Putative inactivation escape 1 protein (51 aa).

As to expression, highly expressed in pancreas, heart and liver followed by brain, placenta, lung, skeletal muscle and kidney. Mostly expressed in females.

This chain is Putative inactivation escape 1 protein (INE1), found in Homo sapiens (Human).